We begin with the raw amino-acid sequence, 408 residues long: Secreted effector protein SseJ (408 aa).

S151 acts as the Nucleophile in catalysis. Catalysis depends on residues D381 and H384.

It belongs to the 'GDSL' lipolytic enzyme family. As to quaternary structure, interacts with RhoA and indirectly with SifA.

It localises to the secreted. The protein resides in the host cytoplasm. Functionally, effector proteins function to alter host cell physiology and promote bacterial survival in host tissues. This protein is required for endosomal tubulation and negatively regulates the formation of Salmonella-induced filaments (Sifs) in epithelial cells. Has both deacylase and esterification activities in vitro, but esterification is probably the dominant activity in host cells. Significantly contributes to cholesterol esterification, which reduces cellular cholesterol in cells and abrogates the ability of SifA to associate with cholesterol and LAMP-1 vesicles. This Salmonella typhimurium (strain LT2 / SGSC1412 / ATCC 700720) protein is Secreted effector protein SseJ (sseJ).